Consider the following 487-residue polypeptide: Serine/threonine-protein kinase 4 (487 aa).

At Met1 the chain carries N-acetylmethionine. Thr3 is modified (phosphothreonine). The Protein kinase domain occupies 30–281 (FDVLEKLGEG…ATQLLQHPFV (252 aa)). Residues 36–44 (LGEGSYGSV) and Lys59 contribute to the ATP site. Asp149 (proton acceptor) is an active-site residue. Thr183 bears the Phosphothreonine; by autocatalysis mark. Ser265 carries the phosphoserine modification. Positions 290–310 (LRDLINEAMDVKLKRQEAQQR) form a coiled coil. The interval 305–338 (QEAQQREVDQDDEENSEEDELDSGTMVRAVGDDM) is disordered. The span at 313 to 326 (DQDDEENSEEDELD) shows a compositional bias: acidic residues. Ser320 is modified (phosphoserine). A phosphothreonine mark is found at Thr340 and Thr367. Phosphothreonine; by PKB/AKT1 is present on Thr387. A phosphoserine mark is found at Ser410 and Ser414. The residue at position 433 (Tyr433) is a Phosphotyrosine. In terms of domain architecture, SARAH spans 433 to 480 (YEFLKSWTVEDLQKRLLALDPMMEQEIEEIRQKYQSKRQPILDAIEAK).

This sequence belongs to the protein kinase superfamily. STE Ser/Thr protein kinase family. STE20 subfamily. As to quaternary structure, homodimer; mediated via the coiled-coil region. Interacts with NORE1, which inhibits autoactivation. Interacts with and stabilizes SAV1. Interacts with RASSF1. Interacts with FOXO3. Interacts with RASSF2 (via SARAH domain). Interacts with AR, PKB/AKT1, TNNI3 and SIRT1. Interacts with DLG5 (via PDZ domain 3). Interacts with MARK3 and SCRIB in the presence of DLG5. It depends on Mg(2+) as a cofactor. Autophosphorylated on serine and threonine residues. Phosphorylation at Thr-387 by PKB/AKT1, leads to inhibition of its: kinase activity, nuclear translocation and autophosphorylation at Thr-183. It also diminishes its cleavage by caspases and its ability to phosphorylate FOXO3. In terms of processing, proteolytically cleaved by caspase-3 during apoptosis at Asp-326 and Asp-349 resulting in a 37 kDa or a 39 kDa subunit respectively. The 39 kDa subunit is further cleaved into the 37 kDa form. Proteolytic cleavage results in kinase activation and nuclear translocation of the truncated form (MST1/N). It is less likely that cleavage at Asp-349 is a prerequisite for activation as this site is not conserved in the murine ortholog.

The protein localises to the cytoplasm. Its subcellular location is the nucleus. It catalyses the reaction L-seryl-[protein] + ATP = O-phospho-L-seryl-[protein] + ADP + H(+). The enzyme catalyses L-threonyl-[protein] + ATP = O-phospho-L-threonyl-[protein] + ADP + H(+). With respect to regulation, inhibited by the C-terminal non-catalytic region. Activated by caspase-cleavage. Full activation also requires homodimerization and autophosphorylation of Thr-183. Activated by RASSF1 which acts by preventing its dephosphorylation. Functionally, stress-activated, pro-apoptotic kinase which, following caspase-cleavage, enters the nucleus and induces chromatin condensation followed by internucleosomal DNA fragmentation. Key component of the Hippo signaling pathway which plays a pivotal role in organ size control and tumor suppression by restricting proliferation and promoting apoptosis. The core of this pathway is composed of a kinase cascade wherein STK3/MST2 and STK4/MST1, in complex with its regulatory protein SAV1, phosphorylates and activates LATS1/2 in complex with its regulatory protein MOB1, which in turn phosphorylates and inactivates YAP1 oncoprotein and WWTR1/TAZ. Phosphorylation of YAP1 by LATS2 inhibits its translocation into the nucleus to regulate cellular genes important for cell proliferation, cell death, and cell migration. STK3/MST2 and STK4/MST1 are required to repress proliferation of mature hepatocytes, to prevent activation of facultative adult liver stem cells (oval cells), and to inhibit tumor formation. Phosphorylates 'Ser-14' of histone H2B (H2BS14ph) during apoptosis. Phosphorylates FOXO3 upon oxidative stress, which results in its nuclear translocation and cell death initiation. Phosphorylates MOBKL1A, MOBKL1B and RASSF2. Phosphorylates TNNI3 (cardiac Tn-I) and alters its binding affinity to TNNC1 (cardiac Tn-C) and TNNT2 (cardiac Tn-T). Phosphorylates FOXO1 on 'Ser-212' and regulates its activation and stimulates transcription of PMAIP1 in a FOXO1-dependent manner. Phosphorylates SIRT1 and inhibits SIRT1-mediated p53/TP53 deacetylation, thereby promoting p53/TP53 dependent transcription and apoptosis upon DNA damage. Acts as an inhibitor of PKB/AKT1. Phosphorylates AR on 'Ser-650' and suppresses its activity by intersecting with PKB/AKT1 signaling and antagonizing formation of AR-chromatin complexes. The polypeptide is Serine/threonine-protein kinase 4 (STK4) (Lemur catta (Ring-tailed lemur)).